The chain runs to 443 residues: MTTLNAKLASQYPAHIAQLQQMTKSVLSRENLEGLVIHSGQEVKAFLDDNCYPFKVNPHFKYWLPLIDIPNSWLVVNGEDKPTLIYYQPVDFWHKVTPLAESYWGEFFNIKILTKASEVDKLLPYDKKGFAYIGSHIEVATALGFEAINPEPLLNYVHYHRGYKSKYEHECLRQSNALAVKAHQAARNAFLQGDSEYDIQQAYLKSIGYGTNDTPYGNIVALNKNCSILHYMSLDKMTPQVHQSFLIDAGANFNGYSADITRTYSYKNDKFAELIARMDQLMLNAVAGLKPGVSYVDLHIETHRAIGQVLRDFNFINVDADTAVESGIISTFFPHGLGHHLGLQVHDVGGFMADERGTHVNTPAEHPFLRTSRVIETNQVFTIEPGLYFIDSLLADLKASANADQVNWQNVDEMRCFGGIRIEDNIIVHQSHNENMTRDLGLS.

Mn(2+) is bound by residues aspartate 248, aspartate 259, histidine 339, glutamate 384, and glutamate 423.

Belongs to the peptidase M24B family. Bacterial-type prolidase subfamily. It depends on Mn(2+) as a cofactor.

The enzyme catalyses Xaa-L-Pro dipeptide + H2O = an L-alpha-amino acid + L-proline. Its function is as follows. Splits dipeptides with a prolyl residue in the C-terminal position. This is Xaa-Pro dipeptidase from Colwellia psychrerythraea (strain 34H / ATCC BAA-681) (Vibrio psychroerythus).